The following is a 176-amino-acid chain: Pituitary adenylate cyclase-activating polypeptide (176 aa).

Residues 1-24 (MTMCSGARLALLVYGIIMHSSVYS) form the signal peptide. The propeptide occupies 25-79 (SPAAAGLRFPGIRPEEEAYGEDGNPLPDFDGSEPPGAGSPASAPRAAAAWYRPAG). The tract at residues 39–68 (EEEAYGEDGNPLPDFDGSEPPGAGSPASAP) is disordered. The segment covering 56–68 (SEPPGAGSPASAP) has biased composition (low complexity). The interval 150–158 (VKKYLAAVL) is important for receptor binding. The residue at position 158 (leucine 158) is a Leucine amide. Lysine amide is present on lysine 169. A propeptide spanning residues 173–176 (IAYL) is cleaved from the precursor.

This sequence belongs to the glucagon family.

Its subcellular location is the secreted. PACAP is a neuropeptide involved in diverse array of physiological processes through activating the PACAP subfamily of class B1 G protein-coupled receptors: VIP receptor 1 (VIPR1), VIP receptor 2 (VIPR2), and PACAP type I receptor (ADCYAP1R1). Exerts neuroprotective and general cytoprotective effects due to anti-apoptotic, anti-inflammatory, and antioxidant actions. Promotes neuron projection development through the RAPGEF2/Rap1/B-Raf/ERK pathway. In chromaffin cells, induces long-lasting increase of intracellular calcium concentrations and neuroendocrine secretion. Involved in the control of glucose homeostasis, induces insulin secretion by pancreatic beta cells. PACAP exists in two bioactive forms from proteolysis of the same precursor protein, PACAP27 and PACAP38, which differ by eleven amino acid residues in the C-terminus. In Homo sapiens (Human), this protein is Pituitary adenylate cyclase-activating polypeptide.